We begin with the raw amino-acid sequence, 232 residues long: Dehydrin DHN2 (232 aa).

Residues 1–12 (MSQYQNQYGAQT) are compositionally biased toward polar residues. Disordered stretches follow at residues 1–92 (MSQY…STNT), 131–156 (PGTE…SGGG), and 173–232 (PGDK…CTGH). The segment covering 73–82 (THTGGVGGYG) has biased composition (gly residues). Residues 131–140 (PGTEQSRTHT) show a composition bias toward basic and acidic residues. Gly residues predominate over residues 143 to 156 (TGYGSTGYGASGGG). The span at 200 to 223 (YVREEHRVDHGEKKGIMDKIKEKL) shows a compositional bias: basic and acidic residues.

Belongs to the plant dehydrin family.

This is Dehydrin DHN2 (DHN2) from Pisum sativum (Garden pea).